A 133-amino-acid chain; its full sequence is Ribosome-binding factor A (133 aa).

This sequence belongs to the RbfA family. As to quaternary structure, monomer. Binds 30S ribosomal subunits, but not 50S ribosomal subunits or 70S ribosomes.

The protein resides in the cytoplasm. One of several proteins that assist in the late maturation steps of the functional core of the 30S ribosomal subunit. Associates with free 30S ribosomal subunits (but not with 30S subunits that are part of 70S ribosomes or polysomes). Required for efficient processing of 16S rRNA. May interact with the 5'-terminal helix region of 16S rRNA. The polypeptide is Ribosome-binding factor A (Salmonella typhimurium (strain LT2 / SGSC1412 / ATCC 700720)).